Consider the following 221-residue polypeptide: UPF0502 protein PLES_16071 (221 aa).

It belongs to the UPF0502 family.

The chain is UPF0502 protein PLES_16071 from Pseudomonas aeruginosa (strain LESB58).